Here is a 228-residue protein sequence, read N- to C-terminus: uncharacterized protein (228 aa).

The next 6 membrane-spanning stretches (helical) occupy residues 14–34 (GWYIRGALIANVIIMGFMWLI), 53–73 (FLIIGTFVRAVFIVFGAVLIV), 108–128 (GLTFITILLSNILIAAGFFWL), 148–168 (AVKMAVFAFGAAGTSLVPIFF), 178–198 (TIISSVVIVMLISSTSPGFSI), and 200–220 (SVVYIPLSLAAFGLFFSYMAI).

It is found in the cell membrane. This is an uncharacterized protein from Bacillus subtilis (strain 168).